We begin with the raw amino-acid sequence, 947 residues long: Bromodomain testis-specific protein (947 aa).

The Bromo 1 domain occupies 27–133 (RLTNQLQYLQ…KLFVQKLSQM (107 aa)). Phosphoserine is present on serine 187. Positions 209–220 (KGVKRKADTTTP) match the Nuclear localization signal motif. A Bromo 2 domain is found at 267 to 376 (VKVTEQLRHC…DVFETHFSKI (110 aa)). 4 disordered regions span residues 395–421 (ETTGRENTNEASSEGNSSGDSEDERVQ), 444–512 (PFRK…PMNY), 610–690 (NNQL…VKKM), and 849–873 (HLEQNTKEPKVSQENQRDLGNGLTV). A compositionally biased stretch (low complexity) spans 403–413 (NEASSEGNSSG). The stretch at 417–470 (DERVQRLAKLQEQLKAVHQQLQVLSQVPFRKLNKKKEKSKKEKKKEKVNNSNEN) forms a coiled coil. Positions 447–462 (KLNKKKEKSKKEKKKE) are enriched in basic residues. Basic and acidic residues predominate over residues 470-481 (NPRKMCEQMRLK). Residues 482-494 (EKSKRNQPKKRKQ) show a composition bias toward basic residues. Residues 500 to 582 (KSEDEDNAKP…ACLRKRPLKP (83 aa)) form the NET domain. Low complexity predominate over residues 631 to 668 (VGSVSRLSESSSSSSSSSESESSSSDLSSSDSSGSESE). Basic and acidic residues-rich tracts occupy residues 674–690 (TEVKPNDSPSKENVKKM) and 849–865 (HLEQNTKEPKVSQENQR).

Belongs to the BET family. Interacts with SMARCE1. Interacts with mRNA splicing machinery proteins SRSF2, DDX5, HNRNPK and TARDBP. Interacts with the acetylated N-terminus of histone H1, H2, H3 and H4. Interacts with P-TEFb components CDK9 and CCNT1/cyclin-T1. Ubiquitinated in a SPOP-dependent manner, leading to proteasomal degradation.

The protein resides in the nucleus. In terms of biological role, testis-specific chromatin protein that specifically binds histone H4 acetylated at 'Lys-5' and 'Lys-8' (H4K5ac and H4K8ac, respectively) and plays a key role in spermatogenesis. Required in late pachytene spermatocytes: plays a role in meiotic and post-meiotic cells by binding to acetylated histones at the promoter of specific meiotic and post-meiotic genes, facilitating their activation at the appropriate time. In the post-meiotic phase of spermatogenesis, binds to hyperacetylated histones and participates in their general removal from DNA. Also recognizes and binds a subset of butyrylated histones: able to bind histone H4 butyrylated at 'Lys-8' (H4K8ac), while it is not able to bind H4 butyrylated at 'Lys-5' (H4K5ac). Also acts as a component of the splicing machinery in pachytene spermatocytes and round spermatids and participates in 3'-UTR truncation of specific mRNAs in post-meiotic spermatids. Required for chromocenter organization, a structure comprised of peri-centromeric heterochromatin. This chain is Bromodomain testis-specific protein (BRDT), found in Macaca fascicularis (Crab-eating macaque).